We begin with the raw amino-acid sequence, 120 residues long: ATP-dependent Clp protease adapter protein ClpS (120 aa).

The protein belongs to the ClpS family. As to quaternary structure, binds to the N-terminal domain of the chaperone ClpA.

Functionally, involved in the modulation of the specificity of the ClpAP-mediated ATP-dependent protein degradation. The polypeptide is ATP-dependent Clp protease adapter protein ClpS (Pseudomonas savastanoi pv. phaseolicola (strain 1448A / Race 6) (Pseudomonas syringae pv. phaseolicola (strain 1448A / Race 6))).